We begin with the raw amino-acid sequence, 260 residues long: Carbonic anhydrase 2 (260 aa).

Position 2 is an N-acetylserine (Ser-2). Position 2 is a phosphoserine (Ser-2). The region spanning 3 to 259 (HHWGYGKHNG…LKNRQVRGFP (257 aa)) is the Alpha-carbonic anhydrase domain. The active-site Proton donor/acceptor is His-64. The Zn(2+) site is built by His-94, His-96, and His-119. Phosphoserine occurs at positions 165 and 172. 198–199 (TT) lines the substrate pocket.

The protein belongs to the alpha-carbonic anhydrase family. As to quaternary structure, interacts with SLC4A4. Interaction with SLC4A7 regulates SLC4A7 transporter activity. The cofactor is Zn(2+).

It localises to the cytoplasm. It is found in the cell membrane. It catalyses the reaction hydrogencarbonate + H(+) = CO2 + H2O. The catalysed reaction is urea = cyanamide + H2O. Inhibited by acetazolamide. Its function is as follows. Catalyzes the reversible hydration of carbon dioxide. Can also hydrate cyanamide to urea. Involved in the regulation of fluid secretion into the anterior chamber of the eye. Essential for bone resorption and osteoclast differentiation. Contributes to intracellular pH regulation in the duodenal upper villous epithelium during proton-coupled peptide absorption. Stimulates the chloride-bicarbonate exchange activity of SLC26A6. This Bos taurus (Bovine) protein is Carbonic anhydrase 2 (CA2).